The sequence spans 197 residues: Probable GTP-binding protein EngB (197 aa).

An EngB-type G domain is found at 22-194 (DLPEIAFAGR…LETIARMTGI (173 aa)). GTP-binding positions include 30–37 (GRSNVGKS), 57–61 (GKTRL), 75–78 (DLPG), 142–145 (TKAD), and 173–175 (FST). Residues S37 and T59 each contribute to the Mg(2+) site.

It belongs to the TRAFAC class TrmE-Era-EngA-EngB-Septin-like GTPase superfamily. EngB GTPase family. Mg(2+) serves as cofactor.

In terms of biological role, necessary for normal cell division and for the maintenance of normal septation. The chain is Probable GTP-binding protein EngB from Desulfosudis oleivorans (strain DSM 6200 / JCM 39069 / Hxd3) (Desulfococcus oleovorans).